Reading from the N-terminus, the 329-residue chain is Caveolae-associated protein 4a (329 aa).

Disordered regions lie at residues 198–260 (SKEN…NIAK) and 274–329 (KERT…IHED). A coiled-coil region spans residues 198 to 262 (SKENMNKTRE…RLKENIAKKA (65 aa)). Over residues 201 to 220 (NMNKTREKTRENLSKTKESL) the composition is skewed to basic and acidic residues. The segment covering 221-232 (SKTGQTLGTKFN) has biased composition (polar residues). Residues 242–260 (EQREKIKQSSERLKENIAK) show a composition bias toward basic and acidic residues. Positions 279-290 (AEGQEGAEAEPA) are enriched in low complexity. A Phosphothreonine modification is found at T292. Basic and acidic residues predominate over residues 310–329 (TENKREGPVSEEGATRIHED).

It belongs to the CAVIN family.

The protein localises to the cytoplasm. The protein resides in the myofibril. Its subcellular location is the sarcomere. It localises to the membrane. It is found in the caveola. Induces rhoa activation and activates nppa transcription and myofibrillar organization through the rho/rock signaling pathway. The sequence is that of Caveolae-associated protein 4a (cavin4a) from Danio rerio (Zebrafish).